A 146-amino-acid polypeptide reads, in one-letter code: Large ribosomal subunit protein uL15 (146 aa).

The segment covering 1 to 13 has biased composition (basic and acidic residues); sequence MKLHELKPSEGSR. The disordered stretch occupies residues 1–57; the sequence is MKLHELKPSEGSRKTRNRVGRGIGSGNGKTAGKGHKGQNARSGGGVRPGFEGGQMPL. 2 stretches are compositionally biased toward gly residues: residues 21-31 and 42-52; these read RGIGSGNGKTA and SGGGVRPGFEG.

This sequence belongs to the universal ribosomal protein uL15 family. As to quaternary structure, part of the 50S ribosomal subunit.

In terms of biological role, binds to the 23S rRNA. The polypeptide is Large ribosomal subunit protein uL15 (Bacillus subtilis (strain 168)).